We begin with the raw amino-acid sequence, 930 residues long: MAPASEAGPAQDPLFSGLILPRSRILDAEALTRSILAEIDAAGPLDPKSARAIAVRQMTEAKAAGNRALSETFEARPREARGLIRAQAALTDGLVTAALRVACERLHPLANPTEAERIAVLAVGGYGRAEMAPHSDVDLLFLTPWKITPWAEMVIESMLYMLWDLRLKVGHSSRTVKDCLRLGREDITIRTALLEHRFLAGHAPLAAELDETLWNDLFRGTGAEFIDAKLEERGQRHKRQGGQRYVLEPNVKEGKGGLRDLQTLYWIGKYLNRVPSPSGLVAAGLLTRDEFETFERAESFLWAVRCHLHYATGRATDQLTFDLQVEVAARMGYADTRGRRGVEVFMQDYFRHATRVGELTRVFLAQLEARHEKREPKIMGLFRRKKRLKPEYSLVNGRIDVLDPKAFLADKLNLLRIFEEALRTGFLIHPGAMRLIAANLHLIDEEMQHDREANRIFLDMLLRHGNPERALRRMNELGVLGAFIPEFERIVAMMQFNVYHHYTVDEHTIQCISTLAQIERHELDEELPIANRILTDGISRRVIYVALLLHDIGKGRPEDHSILGAQIARRVAPRFGLTAEECETVEWLVRYHLLMSDMAQKRDIGDPRTVRDFAKAVRSKKRLDLLTVLTVCDIRGVGPGTWNNWKAQLLRKLYRDTVTALDAGLESLNRENRADEAKRALRELLEEWDPKDLRAELARHYPPYWQALSNATHAVFARMLRGLGETEIRIDLDPDPDRDATRACFALADHPGIFSRLAGALALVGANVVDARTYTTKDGYATAVFWIQDSEGSPYEISRLPRLTSMIDKTLKGEVVAREALKDRDKLKKREAQFRFPTHIAFDNEGSDIYTIIEVDTRDRPGLLYDLTRTLAANNIYIASAVIATYGAQVVDSFYVKDMFGLKLHQKNRQETLEKKLRQAIVEGAERAKQ.

Residues 1–387 form a uridylyltransferase region; sequence MAPASEAGPA…IMGLFRRKKR (387 aa). The uridylyl-removing stretch occupies residues 388–741; sequence LKPEYSLVNG…LDPDPDRDAT (354 aa). One can recognise an HD domain in the interval 504 to 626; sequence VDEHTIQCIS…VRSKKRLDLL (123 aa). ACT domains are found at residues 742–818 and 852–927; these read RACF…VVAR and IIEV…GAER.

This sequence belongs to the GlnD family. Mg(2+) is required as a cofactor.

It catalyses the reaction [protein-PII]-L-tyrosine + UTP = [protein-PII]-uridylyl-L-tyrosine + diphosphate. The enzyme catalyses [protein-PII]-uridylyl-L-tyrosine + H2O = [protein-PII]-L-tyrosine + UMP + H(+). With respect to regulation, uridylyltransferase (UTase) activity is inhibited by glutamine, while glutamine activates uridylyl-removing (UR) activity. Its function is as follows. Modifies, by uridylylation and deuridylylation, the PII regulatory proteins (GlnB and homologs), in response to the nitrogen status of the cell that GlnD senses through the glutamine level. Under low glutamine levels, catalyzes the conversion of the PII proteins and UTP to PII-UMP and PPi, while under higher glutamine levels, GlnD hydrolyzes PII-UMP to PII and UMP (deuridylylation). Thus, controls uridylylation state and activity of the PII proteins, and plays an important role in the regulation of nitrogen fixation and metabolism. The chain is Bifunctional uridylyltransferase/uridylyl-removing enzyme from Cereibacter sphaeroides (strain ATCC 17023 / DSM 158 / JCM 6121 / CCUG 31486 / LMG 2827 / NBRC 12203 / NCIMB 8253 / ATH 2.4.1.) (Rhodobacter sphaeroides).